The sequence spans 272 residues: 2-amino-3,7-dideoxy-D-threo-hept-6-ulosonate synthase (272 aa).

The Proton acceptor role is filled by D33. Residues 33-37 and 153-155 each bind 1-deoxy-D-threo-hexo-2,5-diulose 6-phosphate; these read DHGVS and YPR. Catalysis depends on Y153, which acts as the Proton donor. The active-site Schiff-base intermediate with substrate is K184. 1-deoxy-D-threo-hexo-2,5-diulose 6-phosphate contacts are provided by residues 209-210 and 237-238; these read GG and GR.

The protein belongs to the DeoC/FbaB aldolase family. ADHS subfamily. Homodecamer.

The catalysed reaction is 1-deoxy-D-threo-hexo-2,5-diulose 6-phosphate + L-aspartate 4-semialdehyde = 2,3-dioxopropyl phosphate + 2-amino-2,3,7-trideoxy-D-lyxo-hept-6-ulosonate. In terms of biological role, catalyzes a transaldol reaction between 6-deoxy-5-ketofructose 1-phosphate (DKFP) and L-aspartate semialdehyde (ASA) with an elimination of hydroxypyruvaldehyde phosphate to yield 2-amino-3,7-dideoxy-D-threo-hept-6-ulosonate (ADH). Plays a key role in an alternative pathway of the biosynthesis of 3-dehydroquinate (DHQ), which is involved in the canonical pathway for the biosynthesis of aromatic amino acids and which is also a precursor for the biosynthesis of p-aminobenzoic acid (PABA) in M.maripaludis. Does not possess fructose-bisphosphate (FBP) aldolase activity. In Methanococcus maripaludis (strain DSM 14266 / JCM 13030 / NBRC 101832 / S2 / LL), this protein is 2-amino-3,7-dideoxy-D-threo-hept-6-ulosonate synthase.